The following is a 279-amino-acid chain: MNHAVTIKSFVSTSPLSDLERGAVDKSKVAESFSAAAATYDLLAGMQKEVGESLVSLSREGCPQDIIDVGCGTGWLTHRLKNSFPEARLCAYDLSPGMIEYALAHHDNVAEIWAVADMESLPVANASQDLVFSNMAMQWLDDPRAWFAEASRVLRPGGRLICSTLLTQTLFELEQAWHGVDGGRHVNRFLSAEQVAEAAVSCGLRGECRESLYVRFHDSALDVMKELKGIGAHNIQSERPQGLTGKRRLRRVIENYEKCRQEQGVPATYHVGVCVYSRI.

This sequence belongs to the methyltransferase superfamily.

It carries out the reaction malonyl-[ACP] + S-adenosyl-L-methionine = malonyl-[ACP] methyl ester + S-adenosyl-L-homocysteine. It functions in the pathway cofactor biosynthesis; biotin biosynthesis. Its function is as follows. Converts the free carboxyl group of a malonyl-thioester to its methyl ester by transfer of a methyl group from S-adenosyl-L-methionine (SAM). It allows to synthesize pimeloyl-ACP via the fatty acid synthetic pathway. This is Malonyl-[acyl-carrier protein] O-methyltransferase from Hahella chejuensis (strain KCTC 2396).